Here is a 273-residue protein sequence, read N- to C-terminus: Large ribosomal subunit protein uL2 (273 aa).

Disordered regions lie at residues 28-53 (KPFA…TTRH) and 221-273 (RGTA…RRSK). A compositionally biased stretch (low complexity) spans 39–48 (KSGGRNNNGR).

Belongs to the universal ribosomal protein uL2 family. Part of the 50S ribosomal subunit. Forms a bridge to the 30S subunit in the 70S ribosome.

Functionally, one of the primary rRNA binding proteins. Required for association of the 30S and 50S subunits to form the 70S ribosome, for tRNA binding and peptide bond formation. It has been suggested to have peptidyltransferase activity; this is somewhat controversial. Makes several contacts with the 16S rRNA in the 70S ribosome. This chain is Large ribosomal subunit protein uL2, found in Klebsiella pneumoniae (strain 342).